The primary structure comprises 189 residues: Cell division protein SepF (189 aa).

The tract at residues 18-64 (EVTDHEDVAKERPVKVQKTEQTPSQQQRKPERPQETVPPRRQHIKSD) is disordered. Residues 22–35 (HEDVAKERPVKVQK) are compositionally biased toward basic and acidic residues.

Belongs to the SepF family. As to quaternary structure, homodimer. Interacts with FtsZ.

The protein localises to the cytoplasm. Functionally, cell division protein that is part of the divisome complex and is recruited early to the Z-ring. Probably stimulates Z-ring formation, perhaps through the cross-linking of FtsZ protofilaments. Its function overlaps with FtsA. The chain is Cell division protein SepF from Streptococcus thermophilus (strain ATCC BAA-250 / LMG 18311).